The primary structure comprises 394 residues: GTPase Obg (394 aa).

Residues 5-163 (SNFVDYVKIY…RMVIMQLKML (159 aa)) form the Obg domain. The tract at residues 26–45 (HFRREKYIPKGGPDGGDGGR) is disordered. The region spanning 164–330 (ADVGLVGFPN…LKDTLWKELS (167 aa)) is the OBG-type G domain. Residues 170-177 (GFPNAGKS), 195-199 (FTTLE), 217-220 (DIPG), 284-287 (TKCD), and 311-313 (SAV) each bind GTP. Mg(2+) contacts are provided by Ser177 and Thr197.

The protein belongs to the TRAFAC class OBG-HflX-like GTPase superfamily. OBG GTPase family. In terms of assembly, monomer. Mg(2+) serves as cofactor.

It localises to the cytoplasm. Functionally, an essential GTPase which binds GTP, GDP and possibly (p)ppGpp with moderate affinity, with high nucleotide exchange rates and a fairly low GTP hydrolysis rate. Plays a role in control of the cell cycle, stress response, ribosome biogenesis and in those bacteria that undergo differentiation, in morphogenesis control. The chain is GTPase Obg from Porphyromonas gingivalis (strain ATCC 33277 / DSM 20709 / CIP 103683 / JCM 12257 / NCTC 11834 / 2561).